The sequence spans 520 residues: MTINQNNSNHTFSSHNLDNSPHKINKLINKFSDYIWPIKRQELSKFLFITLLMFCILFIQNLIRALKDSIVTTMIGAETISFLKFWGVMPCAFLMTAIYVKLVNRMKAENIFYLIISIFLAFFALFAYVIFPNHEILHLSPTTAQNLIASLPNLKWFILLLSKWSFSLFYIIAELWPNVAFALLFWQFVNNITTVEESKRFYPLFGLLSQTGIYLAGQFLENLSHINEYVVAKFSLQASFHTLSVQIILTIVLILGIVGIKTFWLLNHKVLDKEHMALLRFKAKKKTMTIAESFQMILSSRHIRLIATLLICYGIAINLVEGPWKAAATKIYKTPTEYAAFIGNYLSYTGAFTILFVVLGSNIVRKLGWFTAAIITPIIVFTTGILFFAVNNFESSAGLIVASFILTDPALIAITIGAIQNVLSKSSKYTLFDSTKEMAYVPLDKEIKIKGKAAADVLGTKLGKSGSAFLQSLVFIILPSASYQSISVCLMFIFIITCLIWFWAVKELNKEYKKSVKFSQ.

Transmembrane regions (helical) follow at residues 43–63 (LSKFLFITLLMFCILFIQNLI), 80–100 (ISFLKFWGVMPCAFLMTAIYV), 111–131 (IFYLIISIFLAFFALFAYVIF), 166–186 (FSLFYIIAELWPNVAFALLFW), 201–221 (FYPLFGLLSQTGIYLAGQFLE), 240–260 (FHTLSVQIILTIVLILGIVGI), 305–325 (LIATLLICYGIAINLVEGPWK), 339–359 (AAFIGNYLSYTGAFTILFVVL), 370–390 (FTAAIITPIIVFTTGILFFAV), 399–419 (LIVASFILTDPALIAITIGAI), 462–482 (LGKSGSAFLQSLVFIILPSAS), and 485–505 (SISVCLMFIFIITCLIWFWAV).

Belongs to the ADP/ATP translocase tlc family.

The protein resides in the cell membrane. Provides the rickettsial cell with host ATP in exchange for rickettsial ADP. This is an obligate exchange system. This energy acquiring activity is an important component of rickettsial parasitism. The polypeptide is ADP,ATP carrier protein 4 (tlcD) (Rickettsia bellii (strain RML369-C)).